Reading from the N-terminus, the 418-residue chain is Vasopressin V1a receptor (418 aa).

Residues 1–15 (MRFSGSPSPGPSNSS) show a composition bias toward low complexity. The disordered stretch occupies residues 1–20 (MRFSGSPSPGPSNSSRWWPL). At 1 to 51 (MRFSGSPSPGPSNSSRWWPLDAGDANTSGDLAGLGEDGGPQADTRNEELAK) the chain is on the extracellular side. 2 N-linked (GlcNAc...) asparagine glycosylation sites follow: N13 and N26. A helical membrane pass occupies residues 52-75 (LEIAVLAVIFVVAVLGNSSVLLAL). At 76–87 (HRTPRKTSRMHL) the chain is on the cytoplasmic side. A helical membrane pass occupies residues 88–109 (FIRHLSLADLAVAFFQVLPQLG). The Extracellular portion of the chain corresponds to 110-124 (WDITYRFRGPDGLCR). The cysteines at positions 123 and 202 are disulfide-linked. The helical transmembrane segment at 125–146 (VVKHMQVFAMFASAYMLVVMTA) threads the bilayer. Topologically, residues 147–167 (DRYIAVCHPLKTLQQPARRSR) are cytoplasmic. A helical membrane pass occupies residues 168–189 (LMIAAAWVLSFVLSTPQYFVFS). At 190 to 217 (MVEVSNVTKTYDCWANFIHPWGLPAYVT) the chain is on the extracellular side. N-linked (GlcNAc...) asparagine glycosylation occurs at N195. A helical membrane pass occupies residues 218 to 238 (WMTGSVFVAPVVILGTCYGFI). At 239-293 (CYHIWRKVRGKTAGRQGGPAEGAGESALYRGVLHARCVSSVKTISRAKIRTVKMT) the chain is on the cytoplasmic side. A helical transmembrane segment spans residues 294 to 313 (FVIVTAYIVCWAPFFIIQMW). Over 314 to 331 (SAWDKNFSWVESENPATA) the chain is Extracellular. N-linked (GlcNAc...) asparagine glycosylation occurs at N319. Residues 332-351 (IPALLASLNSCCNPWIYMFF) form a helical membrane-spanning segment. Residues 352 to 418 (SGHLLQDCAQ…KSIKFIPVST (67 aa)) are Cytoplasmic-facing. S-palmitoyl cysteine attachment occurs at residues C365 and C366. Positions 377-418 (GSDSMSRRQTSFTNNRSPTNSMGTWKDSPKSSKSIKFIPVST) are disordered. Positions 383 to 399 (RRQTSFTNNRSPTNSMG) are enriched in polar residues. S404 carries the post-translational modification Phosphoserine.

Belongs to the G-protein coupled receptor 1 family. Vasopressin/oxytocin receptor subfamily.

The protein resides in the cell membrane. Functionally, receptor for arginine vasopressin. The activity of this receptor is mediated by G proteins which activate a phosphatidyl-inositol-calcium second messenger system. The polypeptide is Vasopressin V1a receptor (AVPR1A) (Ovis aries (Sheep)).